The chain runs to 429 residues: Serine--tRNA ligase (429 aa).

L-serine is bound at residue Thr-236–Glu-238. Arg-267 to Glu-269 is a binding site for ATP. Position 290 (Glu-290) interacts with L-serine. Glu-354–Ser-357 contributes to the ATP binding site. Ser-390 contributes to the L-serine binding site.

Belongs to the class-II aminoacyl-tRNA synthetase family. Type-1 seryl-tRNA synthetase subfamily. In terms of assembly, homodimer. The tRNA molecule binds across the dimer.

It localises to the cytoplasm. It carries out the reaction tRNA(Ser) + L-serine + ATP = L-seryl-tRNA(Ser) + AMP + diphosphate + H(+). It catalyses the reaction tRNA(Sec) + L-serine + ATP = L-seryl-tRNA(Sec) + AMP + diphosphate + H(+). Its pathway is aminoacyl-tRNA biosynthesis; selenocysteinyl-tRNA(Sec) biosynthesis; L-seryl-tRNA(Sec) from L-serine and tRNA(Sec): step 1/1. Its function is as follows. Catalyzes the attachment of serine to tRNA(Ser). Is also able to aminoacylate tRNA(Sec) with serine, to form the misacylated tRNA L-seryl-tRNA(Sec), which will be further converted into selenocysteinyl-tRNA(Sec). The sequence is that of Serine--tRNA ligase from Gloeobacter violaceus (strain ATCC 29082 / PCC 7421).